A 250-amino-acid chain; its full sequence is Ribonuclease HII (250 aa).

The RNase H type-2 domain occupies 66–250 (ELVAGVDEVG…TFAPVSDFFK (185 aa)). A divalent metal cation contacts are provided by D72, E73, and D164.

Belongs to the RNase HII family. Mn(2+) serves as cofactor. The cofactor is Mg(2+).

The protein localises to the cytoplasm. It carries out the reaction Endonucleolytic cleavage to 5'-phosphomonoester.. Functionally, endonuclease that specifically degrades the RNA of RNA-DNA hybrids. In Lactobacillus helveticus (strain DPC 4571), this protein is Ribonuclease HII.